Consider the following 241-residue polypeptide: Small ribosomal subunit protein uS3 (241 aa).

The KH type-2 domain maps to 39 to 107; that stretch reads IREVLMKNLK…EVVINIVEVR (69 aa). The tract at residues 219 to 241 is disordered; it reads MAELDHAGGGGGGERRRRERDAA. The span at 231–241 shows a compositional bias: basic and acidic residues; it reads GERRRRERDAA.

This sequence belongs to the universal ribosomal protein uS3 family. Part of the 30S ribosomal subunit. Forms a tight complex with proteins S10 and S14.

In terms of biological role, binds the lower part of the 30S subunit head. Binds mRNA in the 70S ribosome, positioning it for translation. In Beijerinckia indica subsp. indica (strain ATCC 9039 / DSM 1715 / NCIMB 8712), this protein is Small ribosomal subunit protein uS3.